We begin with the raw amino-acid sequence, 156 residues long: MDINLTLIVQMLVFAAFVLFTMKLVWPPLAKALEERQDKIADGLAAAERGRKELELAQHRVKDELKQAKAHSADIIDKANKRASEIIEAAKEAAKREAQIQAKLAQEQIAQQVNHAKEELRKQVAKLAITGAEKILMREVDAKANSELLDNLIEEI.

The chain crosses the membrane as a helical span at residues 5 to 25 (LTLIVQMLVFAAFVLFTMKLV).

The protein belongs to the ATPase B chain family. In terms of assembly, F-type ATPases have 2 components, F(1) - the catalytic core - and F(0) - the membrane proton channel. F(1) has five subunits: alpha(3), beta(3), gamma(1), delta(1), epsilon(1). F(0) has three main subunits: a(1), b(2) and c(10-14). The alpha and beta chains form an alternating ring which encloses part of the gamma chain. F(1) is attached to F(0) by a central stalk formed by the gamma and epsilon chains, while a peripheral stalk is formed by the delta and b chains.

Its subcellular location is the cell inner membrane. Its function is as follows. F(1)F(0) ATP synthase produces ATP from ADP in the presence of a proton or sodium gradient. F-type ATPases consist of two structural domains, F(1) containing the extramembraneous catalytic core and F(0) containing the membrane proton channel, linked together by a central stalk and a peripheral stalk. During catalysis, ATP synthesis in the catalytic domain of F(1) is coupled via a rotary mechanism of the central stalk subunits to proton translocation. Functionally, component of the F(0) channel, it forms part of the peripheral stalk, linking F(1) to F(0). This Legionella pneumophila (strain Paris) protein is ATP synthase subunit b.